Consider the following 566-residue polypeptide: Rho GTPase-activating protein gacH (566 aa).

Disordered stretches follow at residues 1-56 (MSGV…SGAT), 65-84 (LLKQQQQPNHSITTNNNNNK), 128-168 (SEDE…SAHS), and 322-366 (KPQV…NSKN). Over residues 14–35 (SSTTATTTGSSKSSLNISKSVS) the composition is skewed to low complexity. Over residues 36–56 (PTGNKAVSPMSSPNSLQSGAT) the composition is skewed to polar residues. The span at 65 to 83 (LLKQQQQPNHSITTNNNNN) shows a compositional bias: low complexity. Residues 130-141 (DEYEDDEDEDEN) show a composition bias toward acidic residues. The segment covering 142 to 160 (NNSVNNNSNNNSNNNNNNN) has biased composition (low complexity). Residues 327 to 337 (KSPQSSGSLST) show a composition bias toward polar residues. The segment covering 345–356 (SSSLQRSRSVSQ) has biased composition (low complexity). The Rho-GAP domain maps to 369–564 (GSLDTILEKE…LLIENYNLFY (196 aa)).

It is found in the cytoplasm. Its function is as follows. Rho GTPase-activating protein involved in the signal transduction pathway. This Dictyostelium discoideum (Social amoeba) protein is Rho GTPase-activating protein gacH (gacH).